The chain runs to 255 residues: MSKALPLRLGVNVDHVATLRNARGGKHPDPVRAALAAIEAGADGITAHLREDRRHIRDADMARLKAEISKPLNFEMAATPDMVQIALATKPHAVCLVPERREEVTTEGGLDVIGHHNTLAPFIARFNDAGIRTSLFIAADPAQIEMAAELHAPVIEIHTGAWCDAVEAGNAVKAEAEWQRIVAGAKLAQSVGLEVHGGHGLDYATAQTISALPQIAELNIGFHLMGEALFVGLTESIRRMRAAMARGRQALEATA.

Asn12 contributes to the 3-amino-2-oxopropyl phosphate binding site. Asp14–His15 is a 1-deoxy-D-xylulose 5-phosphate binding site. Arg23 is a 3-amino-2-oxopropyl phosphate binding site. The Proton acceptor role is filled by His48. Positions 50 and 55 each coordinate 1-deoxy-D-xylulose 5-phosphate. Residue Glu75 is the Proton acceptor of the active site. 1-deoxy-D-xylulose 5-phosphate is bound at residue Thr105. The active-site Proton donor is His199. Residues Gly200 and Gly221–Phe222 contribute to the 3-amino-2-oxopropyl phosphate site.

This sequence belongs to the PNP synthase family. Homooctamer; tetramer of dimers.

It is found in the cytoplasm. It carries out the reaction 3-amino-2-oxopropyl phosphate + 1-deoxy-D-xylulose 5-phosphate = pyridoxine 5'-phosphate + phosphate + 2 H2O + H(+). Its pathway is cofactor biosynthesis; pyridoxine 5'-phosphate biosynthesis; pyridoxine 5'-phosphate from D-erythrose 4-phosphate: step 5/5. Catalyzes the complicated ring closure reaction between the two acyclic compounds 1-deoxy-D-xylulose-5-phosphate (DXP) and 3-amino-2-oxopropyl phosphate (1-amino-acetone-3-phosphate or AAP) to form pyridoxine 5'-phosphate (PNP) and inorganic phosphate. This chain is Pyridoxine 5'-phosphate synthase, found in Rhodopseudomonas palustris (strain BisB18).